The sequence spans 284 residues: Bifunctional protein FolD (284 aa).

NADP(+) contacts are provided by residues 163–165 (GAS), Ile188, and Ile229.

Belongs to the tetrahydrofolate dehydrogenase/cyclohydrolase family. Homodimer.

It carries out the reaction (6R)-5,10-methylene-5,6,7,8-tetrahydrofolate + NADP(+) = (6R)-5,10-methenyltetrahydrofolate + NADPH. The enzyme catalyses (6R)-5,10-methenyltetrahydrofolate + H2O = (6R)-10-formyltetrahydrofolate + H(+). The protein operates within one-carbon metabolism; tetrahydrofolate interconversion. Functionally, catalyzes the oxidation of 5,10-methylenetetrahydrofolate to 5,10-methenyltetrahydrofolate and then the hydrolysis of 5,10-methenyltetrahydrofolate to 10-formyltetrahydrofolate. The chain is Bifunctional protein FolD from Nautilia profundicola (strain ATCC BAA-1463 / DSM 18972 / AmH).